The chain runs to 1863 residues: Breast cancer type 1 susceptibility protein homolog (1863 aa).

The residue at position 1 (Met1) is an N-acetylmethionine. An RING-type zinc finger spans residues 24–65; that stretch reads CPICLELIKEPVSTKCDHIFCRFCMLKLLNQKKGPSQCPLCK. Lys109 participates in a covalent cross-link: Glycyl lysine isopeptide (Lys-Gly) (interchain with G-Cter in SUMO2). Ser114 bears the Phosphoserine mark. Composition is skewed to basic and acidic residues over residues 231 to 240 and 248 to 260; these read KDITNTEHHQ and TTEKHATERHPEK. The interval 231-266 is disordered; that stretch reads KDITNTEHHQSSNNDLNTTEKHATERHPEKYQGSSV. Residue Lys300 forms a Glycyl lysine isopeptide (Lys-Gly) (interchain with G-Cter in SUMO2) linkage. A disordered region spans residues 305 to 336; that stretch reads NKSKQPGLARSQHNRWTGSKETCNDRQTPSTE. A compositionally biased stretch (polar residues) spans 318–334; it reads NRWTGSKETCNDRQTPS. Lys338 is covalently cross-linked (Glycyl lysine isopeptide (Lys-Gly) (interchain with G-Cter in SUMO2)). A phosphoserine mark is found at Ser394, Ser397, Ser422, and Ser433. Residues Lys442, Lys458, and Lys518 each participate in a glycyl lysine isopeptide (Lys-Gly) (interchain with G-Cter in SUMO2) cross-link. Ser550 is modified (phosphoserine). Lys582 is covalently cross-linked (Glycyl lysine isopeptide (Lys-Gly) (interchain with G-Cter in SUMO2)). The disordered stretch occupies residues 653–699; that stretch reads NYNQMPVRHSRNLQLMEDKESATGAKKSNKPNEQTSKRHASDTFPEL. Residues Ser693, Ser707, and Ser724 each carry the phosphoserine modification. Glycyl lysine isopeptide (Lys-Gly) (interchain with G-Cter in SUMO2) cross-links involve residues Lys733 and Lys738. Phosphoserine occurs at positions 752 and 839. The tract at residues 886-914 is disordered; sequence AHSRSLKKQSPKVTSECEQKEENQGKKES. Residues 900-914 are compositionally biased toward basic and acidic residues; that stretch reads SECEQKEENQGKKES. Glycyl lysine isopeptide (Lys-Gly) (interchain with G-Cter in SUMO2) cross-links involve residues Lys917 and Lys986. Ser987 bears the Phosphoserine; by CHEK2 mark. A Phosphoserine modification is found at Ser1008. Residues 1042-1059 show a composition bias toward polar residues; that stretch reads SNINEVGSSTNEVGSSIN. The interval 1042–1062 is disordered; sequence SNINEVGSSTNEVGSSINEVG. Lys1079 participates in a covalent cross-link: Glycyl lysine isopeptide (Lys-Gly) (interchain with G-Cter in SUMO2). A phosphoserine mark is found at Ser1143, Ser1189, Ser1191, Ser1211, Ser1217, Ser1218, Ser1280, Ser1328, Ser1336, Ser1342, and Ser1387. Residues 1323–1397 are disordered; sequence RMRHQSESQG…QSEILTTQQR (75 aa). The segment covering 1342-1360 has biased composition (acidic residues); it reads SDDEERGTGLEEDNQEEQS. The span at 1373–1397 shows a compositional bias: polar residues; sequence ESETSVSEDCSRLSSQSEILTTQQR. The residue at position 1394 (Thr1394) is a Phosphothreonine. The tract at residues 1397 to 1424 is interaction with PALB2; the sequence is RDTMQDNLIKLQQEMAELEAVLEQHGSQ. A phosphoserine mark is found at Ser1423, Ser1457, Ser1524, and Ser1542. Residues 1442–1501 are disordered; sequence LRNPEQSTSEKAVLTSQKSSEYPINQNPEGLSADKFEVSADSSTSKNKEPGVERSSPSKC. The span at 1445–1470 shows a compositional bias: polar residues; the sequence is PEQSTSEKAVLTSQKSSEYPINQNPE. The tract at residues 1540-1618 is disordered; that stretch reads EKSGPHDLME…ESAQSPAAAH (79 aa). The span at 1607–1618 shows a compositional bias: polar residues; the sequence is VAESAQSPAAAH. BRCT domains are found at residues 1642 to 1736 and 1756 to 1855; these read STER…DFEV and PDRK…TYLI.

In terms of assembly, heterodimer with BARD1. Part of the BRCA1-associated genome surveillance complex (BASC), which contains BRCA1, MSH2, MSH6, MLH1, ATM, BLM, PMS2 and the MRE11-RAD50-NBN protein (MRN) complex. This association could be a dynamic process changing throughout the cell cycle and within subnuclear domains. Component of the BRCA1-A complex, at least composed of BRCA1, BARD1, UIMC1/RAP80, ABRAXAS1, BRCC3/BRCC36, BABAM2 and BABAM1/NBA1. Interacts (via the BRCT domains) with ABRAXAS1 (phosphorylated form); this is important for recruitment to sites of DNA damage. Can form a heterotetramer with two molecules of ABRAXAS1 (phosphorylated form). Component of the BRCA1-RBBP8 complex. Interacts (via the BRCT domains) with RBBP8 ('Ser-327' phosphorylated form); the interaction ubiquitinates RBBP8, regulates CHEK1 activation, and involves RBBP8 in BRCA1-dependent G2/M checkpoint control on DNA damage. Associates with RNA polymerase II holoenzyme. Interacts with SMC1A, NELFB, DCLRE1C, CLSPN. CHEK1, CHEK2, BAP1, BRCC3, UBXN1 and PCLAF. Interacts (via BRCT domains) with BRIP1 (phosphorylated form). Interacts with FANCD2 (ubiquitinated form). Interacts with H2AX (phosphorylated on 'Ser-140'). Interacts (via the BRCT domains) with ACACA (phosphorylated form); the interaction prevents dephosphorylation of ACACA. Part of a BRCA complex containing BRCA1, BRCA2 and PALB2. Interacts directly with PALB2; the interaction is essential for its function in HRR. Interacts directly with BRCA2; the interaction occurs only in the presence of PALB2 which serves as the bridging protein. Interacts (via the BRCT domains) with LMO4; the interaction represses the transcriptional activity of BRCA1. Interacts (via the BRCT domains) with CCAR2 (via N-terminus); the interaction represses the transcriptional activator activity of BRCA1. Interacts with EXD2. Interacts (via C-terminus) with DHX9; this interaction is direct and links BRCA1 to the RNA polymerase II holoenzyme. Interacts with DNA helicase ZGRF1; the interaction is increased following DNA damage induction. Post-translationally, phosphorylated in response to IR, UV, and various stimuli that cause checkpoint activation, probably by ATM or ATR. Phosphorylation at Ser-987 by CHEK2 regulates mitotic spindle assembly. Phosphorylation by AURKA regulates centrosomal microtubule nucleation. In terms of processing, autoubiquitinated, undergoes 'Lys-6'-linked polyubiquitination. 'Lys-6'-linked polyubiquitination does not promote degradation.

Its subcellular location is the nucleus. The protein resides in the chromosome. The protein localises to the cytoplasm. The catalysed reaction is S-ubiquitinyl-[E2 ubiquitin-conjugating enzyme]-L-cysteine + [acceptor protein]-L-lysine = [E2 ubiquitin-conjugating enzyme]-L-cysteine + N(6)-ubiquitinyl-[acceptor protein]-L-lysine.. Its pathway is protein modification; protein ubiquitination. In terms of biological role, E3 ubiquitin-protein ligase that specifically mediates the formation of 'Lys-6'-linked polyubiquitin chains and plays a central role in DNA repair by facilitating cellular responses to DNA damage. It is unclear whether it also mediates the formation of other types of polyubiquitin chains. The BRCA1-BARD1 heterodimer coordinates a diverse range of cellular pathways such as DNA damage repair, ubiquitination and transcriptional regulation to maintain genomic stability. Regulates centrosomal microtubule nucleation. Required for appropriate cell cycle arrests after ionizing irradiation in both the S-phase and the G2 phase of the cell cycle. Required for FANCD2 targeting to sites of DNA damage. Inhibits lipid synthesis by binding to inactive phosphorylated ACACA and preventing its dephosphorylation. Contributes to homologous recombination repair (HRR) via its direct interaction with PALB2, fine-tunes recombinational repair partly through its modulatory role in the PALB2-dependent loading of BRCA2-RAD51 repair machinery at DNA breaks. Component of the BRCA1-RBBP8 complex which regulates CHEK1 activation and controls cell cycle G2/M checkpoints on DNA damage via BRCA1-mediated ubiquitination of RBBP8. Acts as a transcriptional activator. The sequence is that of Breast cancer type 1 susceptibility protein homolog (BRCA1) from Macaca mulatta (Rhesus macaque).